The primary structure comprises 94 residues: Integration host factor subunit beta (94 aa).

It belongs to the bacterial histone-like protein family. Heterodimer of an alpha and a beta chain.

Functionally, this protein is one of the two subunits of integration host factor, a specific DNA-binding protein that functions in genetic recombination as well as in transcriptional and translational control. In Brucella melitensis biotype 2 (strain ATCC 23457), this protein is Integration host factor subunit beta.